We begin with the raw amino-acid sequence, 61 residues long: Large ribosomal subunit protein uL30 (61 aa).

The protein belongs to the universal ribosomal protein uL30 family. In terms of assembly, part of the 50S ribosomal subunit.

The polypeptide is Large ribosomal subunit protein uL30 (Exiguobacterium sp. (strain ATCC BAA-1283 / AT1b)).